A 395-amino-acid polypeptide reads, in one-letter code: Phosphoglycerate kinase (395 aa).

Substrate-binding positions include 21-23, Arg36, 59-62, Arg113, and Arg146; these read DLN and HLGR. ATP contacts are provided by residues Lys197, Glu324, and 350–353; that span reads GGDT.

Belongs to the phosphoglycerate kinase family. In terms of assembly, monomer.

The protein resides in the cytoplasm. It carries out the reaction (2R)-3-phosphoglycerate + ATP = (2R)-3-phospho-glyceroyl phosphate + ADP. The protein operates within carbohydrate degradation; glycolysis; pyruvate from D-glyceraldehyde 3-phosphate: step 2/5. The sequence is that of Phosphoglycerate kinase from Acinetobacter baumannii (strain AB307-0294).